A 633-amino-acid polypeptide reads, in one-letter code: 1-deoxy-D-xylulose-5-phosphate synthase (633 aa).

Residues 1-22 (MPTTFHEIPRKRPTTPLLDRAQ) form a disordered region. Thiamine diphosphate is bound by residues histidine 87 and 128-130 (GHS). Residue aspartate 159 coordinates Mg(2+). Thiamine diphosphate-binding positions include 160-161 (GA), asparagine 188, phenylalanine 295, and glutamate 378. Asparagine 188 provides a ligand contact to Mg(2+).

The protein belongs to the transketolase family. DXPS subfamily. In terms of assembly, homodimer. Mg(2+) serves as cofactor. It depends on thiamine diphosphate as a cofactor.

It carries out the reaction D-glyceraldehyde 3-phosphate + pyruvate + H(+) = 1-deoxy-D-xylulose 5-phosphate + CO2. The protein operates within metabolic intermediate biosynthesis; 1-deoxy-D-xylulose 5-phosphate biosynthesis; 1-deoxy-D-xylulose 5-phosphate from D-glyceraldehyde 3-phosphate and pyruvate: step 1/1. Catalyzes the acyloin condensation reaction between C atoms 2 and 3 of pyruvate and glyceraldehyde 3-phosphate to yield 1-deoxy-D-xylulose-5-phosphate (DXP). The sequence is that of 1-deoxy-D-xylulose-5-phosphate synthase from Pseudomonas fluorescens (strain ATCC BAA-477 / NRRL B-23932 / Pf-5).